A 547-amino-acid polypeptide reads, in one-letter code: CTP synthase (547 aa).

The tract at residues methionine 1–isoleucine 265 is amidoligase domain. Serine 13 is a CTP binding site. A UTP-binding site is contributed by serine 13. Residues serine 14 to leucine 19 and aspartate 71 each bind ATP. The Mg(2+) site is built by aspartate 71 and glutamate 139. Residues aspartate 146–glutamate 148, lysine 186–glutamine 191, and lysine 222 each bind CTP. Residues lysine 186–glutamine 191 and lysine 222 each bind UTP. The 256-residue stretch at lysine 291 to leucine 546 folds into the Glutamine amidotransferase type-1 domain. Glycine 353 is an L-glutamine binding site. The active-site Nucleophile; for glutamine hydrolysis is cysteine 380. Residues leucine 381 to glutamine 384, glutamate 404, and arginine 474 each bind L-glutamine. Active-site residues include histidine 519 and glutamate 521.

It belongs to the CTP synthase family. As to quaternary structure, homotetramer.

It catalyses the reaction UTP + L-glutamine + ATP + H2O = CTP + L-glutamate + ADP + phosphate + 2 H(+). The catalysed reaction is L-glutamine + H2O = L-glutamate + NH4(+). The enzyme catalyses UTP + NH4(+) + ATP = CTP + ADP + phosphate + 2 H(+). It functions in the pathway pyrimidine metabolism; CTP biosynthesis via de novo pathway; CTP from UDP: step 2/2. Allosterically activated by GTP, when glutamine is the substrate; GTP has no effect on the reaction when ammonia is the substrate. The allosteric effector GTP functions by stabilizing the protein conformation that binds the tetrahedral intermediate(s) formed during glutamine hydrolysis. Inhibited by the product CTP, via allosteric rather than competitive inhibition. Functionally, catalyzes the ATP-dependent amination of UTP to CTP with either L-glutamine or ammonia as the source of nitrogen. Regulates intracellular CTP levels through interactions with the four ribonucleotide triphosphates. The chain is CTP synthase from Roseobacter denitrificans (strain ATCC 33942 / OCh 114) (Erythrobacter sp. (strain OCh 114)).